A 312-amino-acid chain; its full sequence is Methionyl-tRNA formyltransferase (312 aa).

Residue 109-112 (SLLP) coordinates (6S)-5,6,7,8-tetrahydrofolate.

It belongs to the Fmt family.

The catalysed reaction is L-methionyl-tRNA(fMet) + (6R)-10-formyltetrahydrofolate = N-formyl-L-methionyl-tRNA(fMet) + (6S)-5,6,7,8-tetrahydrofolate + H(+). Its function is as follows. Attaches a formyl group to the free amino group of methionyl-tRNA(fMet). The formyl group appears to play a dual role in the initiator identity of N-formylmethionyl-tRNA by promoting its recognition by IF2 and preventing the misappropriation of this tRNA by the elongation apparatus. In Listeria innocua serovar 6a (strain ATCC BAA-680 / CLIP 11262), this protein is Methionyl-tRNA formyltransferase.